The sequence spans 93 residues: Putative pterin-4-alpha-carbinolamine dehydratase (93 aa).

The protein belongs to the pterin-4-alpha-carbinolamine dehydratase family.

The catalysed reaction is (4aS,6R)-4a-hydroxy-L-erythro-5,6,7,8-tetrahydrobiopterin = (6R)-L-erythro-6,7-dihydrobiopterin + H2O. This chain is Putative pterin-4-alpha-carbinolamine dehydratase, found in Trichodesmium erythraeum (strain IMS101).